We begin with the raw amino-acid sequence, 731 residues long: 1,4-alpha-glucan branching enzyme GlgB (731 aa).

D412 acts as the Nucleophile in catalysis. The active-site Proton donor is E465.

This sequence belongs to the glycosyl hydrolase 13 family. GlgB subfamily. In terms of assembly, monomer.

It catalyses the reaction Transfers a segment of a (1-&gt;4)-alpha-D-glucan chain to a primary hydroxy group in a similar glucan chain.. It functions in the pathway glycan biosynthesis; glycogen biosynthesis. Catalyzes the formation of the alpha-1,6-glucosidic linkages in glycogen by scission of a 1,4-alpha-linked oligosaccharide from growing alpha-1,4-glucan chains and the subsequent attachment of the oligosaccharide to the alpha-1,6 position. The polypeptide is 1,4-alpha-glucan branching enzyme GlgB (Bordetella pertussis (strain Tohama I / ATCC BAA-589 / NCTC 13251)).